The sequence spans 196 residues: Phosphoheptose isomerase (196 aa).

Residues 38 to 196 (LIAGYRAGAR…VEHALFAPRQ (159 aa)) form the SIS domain. 53–55 (NGG) is a binding site for substrate. Zn(2+) is bound by residues H62 and E66. Residues E66, 95–96 (ND), 121–123 (STS), S126, and Q173 each bind substrate. The Zn(2+) site is built by Q173 and H181.

It belongs to the SIS family. GmhA subfamily. Zn(2+) is required as a cofactor.

It is found in the cytoplasm. It catalyses the reaction 2 D-sedoheptulose 7-phosphate = D-glycero-alpha-D-manno-heptose 7-phosphate + D-glycero-beta-D-manno-heptose 7-phosphate. It participates in carbohydrate biosynthesis; D-glycero-D-manno-heptose 7-phosphate biosynthesis; D-glycero-alpha-D-manno-heptose 7-phosphate and D-glycero-beta-D-manno-heptose 7-phosphate from sedoheptulose 7-phosphate: step 1/1. Functionally, catalyzes the isomerization of sedoheptulose 7-phosphate in D-glycero-D-manno-heptose 7-phosphate. This chain is Phosphoheptose isomerase, found in Mycobacterium bovis (strain ATCC BAA-935 / AF2122/97).